A 237-amino-acid chain; its full sequence is Ribonuclease PH (237 aa).

Residues arginine 86 and glycine 124–arginine 126 each bind phosphate.

The protein belongs to the RNase PH family. As to quaternary structure, homohexameric ring arranged as a trimer of dimers.

It carries out the reaction tRNA(n+1) + phosphate = tRNA(n) + a ribonucleoside 5'-diphosphate. In terms of biological role, phosphorolytic 3'-5' exoribonuclease that plays an important role in tRNA 3'-end maturation. Removes nucleotide residues following the 3'-CCA terminus of tRNAs; can also add nucleotides to the ends of RNA molecules by using nucleoside diphosphates as substrates, but this may not be physiologically important. Probably plays a role in initiation of 16S rRNA degradation (leading to ribosome degradation) during starvation. The chain is Ribonuclease PH from Dinoroseobacter shibae (strain DSM 16493 / NCIMB 14021 / DFL 12).